The sequence spans 149 residues: MRASTILFVLGAAILAVIGVTTALDSGEIDKSTQENHRLLRSGSMEQEPDEERKFIKVPSFMNKAAREAKKAKKKAEIANLVWLKLQKYSDSYALNYVDDMVKSGRSADDEIKFLKKHMKVSNNLQRVIEGHFRSHAELGRVLAKPKYK.

The first 23 residues, 1–23, serve as a signal peptide directing secretion; it reads MRASTILFVLGAAILAVIGVTTA. The short motif at 38-53 is the RxLR-dEER element; it reads RLLRSGSMEQEPDEER.

This sequence belongs to the RxLR effector family.

The protein resides in the secreted. The protein localises to the host nucleus. It is found in the host cytoplasm. Its function is as follows. Secreted effector that completely suppresses the host cell death induced by cell death-inducing proteins. This Plasmopara viticola (Downy mildew of grapevine) protein is Secreted RxLR effector protein 3.